We begin with the raw amino-acid sequence, 252 residues long: Cell division protein ZapD (252 aa).

It belongs to the ZapD family. Interacts with FtsZ.

Its subcellular location is the cytoplasm. In terms of biological role, cell division factor that enhances FtsZ-ring assembly. Directly interacts with FtsZ and promotes bundling of FtsZ protofilaments, with a reduction in FtsZ GTPase activity. The protein is Cell division protein ZapD of Chromobacterium violaceum (strain ATCC 12472 / DSM 30191 / JCM 1249 / CCUG 213 / NBRC 12614 / NCIMB 9131 / NCTC 9757 / MK).